We begin with the raw amino-acid sequence, 370 residues long: Chaperone protein DnaJ (370 aa).

The region spanning 4–68 is the J domain; that stretch reads DYYQVLGVSK…QKRAAYDRFG (65 aa). A CR-type zinc finger spans residues 133–211; the sequence is GIEKNISFSS…CHGMGRYHKQ (79 aa). The Zn(2+) site is built by cysteine 146, cysteine 149, cysteine 163, cysteine 166, cysteine 185, cysteine 188, cysteine 199, and cysteine 202. CXXCXGXG motif repeat units follow at residues 146-153, 163-170, 185-192, and 199-206; these read CDACHGTG, CDSCGGVG, CHKCQGNG, and CKKCHGMG.

Belongs to the DnaJ family. Homodimer. It depends on Zn(2+) as a cofactor.

The protein resides in the cytoplasm. Functionally, participates actively in the response to hyperosmotic and heat shock by preventing the aggregation of stress-denatured proteins and by disaggregating proteins, also in an autonomous, DnaK-independent fashion. Unfolded proteins bind initially to DnaJ; upon interaction with the DnaJ-bound protein, DnaK hydrolyzes its bound ATP, resulting in the formation of a stable complex. GrpE releases ADP from DnaK; ATP binding to DnaK triggers the release of the substrate protein, thus completing the reaction cycle. Several rounds of ATP-dependent interactions between DnaJ, DnaK and GrpE are required for fully efficient folding. Also involved, together with DnaK and GrpE, in the DNA replication of plasmids through activation of initiation proteins. The chain is Chaperone protein DnaJ from Rickettsia typhi (strain ATCC VR-144 / Wilmington).